Here is a 674-residue protein sequence, read N- to C-terminus: Dymeclin (674 aa).

Residue Gly2 is the site of N-myristoyl glycine attachment.

Belongs to the dymeclin family. In terms of assembly, interacts with GOLM1 and PPIB. Myristoylated in vitro; myristoylation is not essential for protein targeting to Golgi compartment.

Its subcellular location is the cytoplasm. It is found in the golgi apparatus. The protein resides in the membrane. Its function is as follows. Necessary for correct organization of Golgi apparatus. Involved in bone development. This Rattus norvegicus (Rat) protein is Dymeclin (Dym).